The following is a 333-amino-acid chain: Serine/threonine-protein phosphatase PP1-beta (333 aa).

Mn(2+) contacts are provided by D63, H65, D91, and N123. Catalysis depends on H124, which acts as the Proton donor. Mn(2+) is bound by residues H172 and H247. The interval 306–333 (GAGGVGSNRPVTPPRNAPAAQPKKGAKK) is disordered. Low complexity predominate over residues 322 to 333 (APAAQPKKGAKK).

Belongs to the PPP phosphatase family. PP-1 subfamily. Interacts with lab-1; the interaction is direct. Interacts with knl-1; the interaction is direct. The cofactor is Mn(2+). As to expression, expressed in gonads, nervous system, intestine and muscles.

The protein localises to the cytoplasm. Its subcellular location is the nucleus. The catalysed reaction is O-phospho-L-seryl-[protein] + H2O = L-seryl-[protein] + phosphate. The enzyme catalyses O-phospho-L-threonyl-[protein] + H2O = L-threonyl-[protein] + phosphate. With respect to regulation, inhibited by okadaic acid. In terms of biological role, serine/threonine-protein phosphatase essential for chromosomal dynamics during meiosis and mitosis. During meiosis, promotes chromosomal cohesion and germline immortality via a small RNA-mediated genome silencing pathway. Antagonizes the function of air-2 kinase during meiosis I and mitosis to promote chromatid cohesion and spindle attachment. Dephosphorylates histone H3 at 'Ser-10'. Dephosphorylates histone H3 at 'Thr-3'. Also involved in the activation of chloride channel clh-3 during cell swelling and meiotic maturation. Promotes small RNA-mediated genome silencing over multiple generations. Essential for embryogenesis. This chain is Serine/threonine-protein phosphatase PP1-beta, found in Caenorhabditis elegans.